The primary structure comprises 73 residues: Protein RALF-like 10 (73 aa).

An N-terminal signal peptide occupies residues 1 to 17 (MKALVICLLVIFAAVIA). 2 disulfides stabilise this stretch: Cys35–Cys44 and Cys64–Cys70.

It belongs to the plant rapid alkalinization factor (RALF) family. Expressed in flowers.

The protein resides in the secreted. Its function is as follows. Cell signaling peptide that may regulate plant stress, growth, and development. Mediates a rapid alkalinization of extracellular space by mediating a transient increase in the cytoplasmic Ca(2+) concentration leading to a calcium-dependent signaling events through a cell surface receptor and a concomitant activation of some intracellular mitogen-activated protein kinases. This is Protein RALF-like 10 (RALFL10) from Arabidopsis thaliana (Mouse-ear cress).